Reading from the N-terminus, the 314-residue chain is Ribosomal RNA small subunit methyltransferase A (314 aa).

N29, V31, G56, E77, D107, and N126 together coordinate S-adenosyl-L-methionine. The tract at residues 291–314 is disordered; the sequence is PKADDAGDDADAQAKADGAQVSTL. A compositionally biased stretch (low complexity) spans 303–314; sequence QAKADGAQVSTL.

It belongs to the class I-like SAM-binding methyltransferase superfamily. rRNA adenine N(6)-methyltransferase family. RsmA subfamily.

It localises to the cytoplasm. It carries out the reaction adenosine(1518)/adenosine(1519) in 16S rRNA + 4 S-adenosyl-L-methionine = N(6)-dimethyladenosine(1518)/N(6)-dimethyladenosine(1519) in 16S rRNA + 4 S-adenosyl-L-homocysteine + 4 H(+). Specifically dimethylates two adjacent adenosines (A1518 and A1519) in the loop of a conserved hairpin near the 3'-end of 16S rRNA in the 30S particle. May play a critical role in biogenesis of 30S subunits. This is Ribosomal RNA small subunit methyltransferase A from Mycolicibacterium gilvum (strain PYR-GCK) (Mycobacterium gilvum (strain PYR-GCK)).